The sequence spans 334 residues: Holliday junction branch migration complex subunit RuvB (334 aa).

Residues 4 to 184 are large ATPase domain (RuvB-L); it reads ADRLISAGVI…FGIVQRLEFY (181 aa). Residues isoleucine 23, arginine 24, glycine 65, lysine 68, threonine 69, threonine 70, 131-133, arginine 174, tyrosine 184, and arginine 221 each bind ATP; that span reads EDY. Threonine 69 provides a ligand contact to Mg(2+). Residues 185–255 are small ATPAse domain (RuvB-S); that stretch reads QVADLEHIVS…VAMKALDMLN (71 aa). The head domain (RuvB-H) stretch occupies residues 258-334; that stretch reads AEGFDFMDRK…YKHFGITREE (77 aa). DNA-binding residues include arginine 294, arginine 313, and arginine 318.

This sequence belongs to the RuvB family. As to quaternary structure, homohexamer. Forms an RuvA(8)-RuvB(12)-Holliday junction (HJ) complex. HJ DNA is sandwiched between 2 RuvA tetramers; dsDNA enters through RuvA and exits via RuvB. An RuvB hexamer assembles on each DNA strand where it exits the tetramer. Each RuvB hexamer is contacted by two RuvA subunits (via domain III) on 2 adjacent RuvB subunits; this complex drives branch migration. In the full resolvosome a probable DNA-RuvA(4)-RuvB(12)-RuvC(2) complex forms which resolves the HJ.

It is found in the cytoplasm. It carries out the reaction ATP + H2O = ADP + phosphate + H(+). In terms of biological role, the RuvA-RuvB-RuvC complex processes Holliday junction (HJ) DNA during genetic recombination and DNA repair, while the RuvA-RuvB complex plays an important role in the rescue of blocked DNA replication forks via replication fork reversal (RFR). RuvA specifically binds to HJ cruciform DNA, conferring on it an open structure. The RuvB hexamer acts as an ATP-dependent pump, pulling dsDNA into and through the RuvAB complex. RuvB forms 2 homohexamers on either side of HJ DNA bound by 1 or 2 RuvA tetramers; 4 subunits per hexamer contact DNA at a time. Coordinated motions by a converter formed by DNA-disengaged RuvB subunits stimulates ATP hydrolysis and nucleotide exchange. Immobilization of the converter enables RuvB to convert the ATP-contained energy into a lever motion, pulling 2 nucleotides of DNA out of the RuvA tetramer per ATP hydrolyzed, thus driving DNA branch migration. The RuvB motors rotate together with the DNA substrate, which together with the progressing nucleotide cycle form the mechanistic basis for DNA recombination by continuous HJ branch migration. Branch migration allows RuvC to scan DNA until it finds its consensus sequence, where it cleaves and resolves cruciform DNA. The protein is Holliday junction branch migration complex subunit RuvB of Yersinia enterocolitica serotype O:8 / biotype 1B (strain NCTC 13174 / 8081).